The primary structure comprises 325 residues: MANIEKDHQKVILVGDGAVGSSYAYALTLQGIAQEVGIVDIFKEKTQGDAIDLSDALAFTSPKKIYAAEYSDAKDADVVVITAGAPQKPGETRLDLVSKNLKILKTIVDPIVESGFNGIFLVAANPVDILTYATWKLSGFPKERVIGSGTSLDSARFRKDIAEMVNVDARSVHAYIMGEHGDTEFPVWSHANIGGIKISEWVKAHPEVKEEELVKIFESVRDAAYTIINLKGATFYGIGTALARITKAILDDENAVLPLSVFMDGQYGLNDIFIGSPAVINRSGITNILEIPLTDHEMESMHKSAKQLKDIVTKAFEELDIETRQ.

NAD(+)-binding positions include Val-19, Asp-40, Lys-45, Tyr-70, and Gly-84–Ala-85. Substrate contacts are provided by Gln-87 and Arg-93. Residues Thr-106, Ala-123–Asn-125, and Ser-148 each bind NAD(+). Asn-125–Asp-128 is a substrate binding site. Asp-153–Arg-156 is a substrate binding site. Residues Arg-158 and His-173 each coordinate beta-D-fructose 1,6-bisphosphate. The active-site Proton acceptor is His-180. Tyr-225 bears the Phosphotyrosine mark. Thr-234 contacts substrate.

Belongs to the LDH/MDH superfamily. LDH family. Homotetramer.

The protein resides in the cytoplasm. It catalyses the reaction (S)-lactate + NAD(+) = pyruvate + NADH + H(+). Its pathway is fermentation; pyruvate fermentation to lactate; (S)-lactate from pyruvate: step 1/1. Its activity is regulated as follows. Allosterically activated by fructose 1,6-bisphosphate (FBP). Catalyzes the conversion of lactate to pyruvate. The chain is L-lactate dehydrogenase from Latilactobacillus sakei subsp. sakei (strain 23K) (Lactobacillus sakei subsp. sakei).